Consider the following 111-residue polypeptide: Large ribosomal subunit protein eL42 (111 aa).

Residues Cys12, Cys15, Cys72, and Cys77 each contribute to the Zn(2+) site.

This sequence belongs to the eukaryotic ribosomal protein eL42 family. In terms of assembly, component of the large ribosomal subunit.

The protein localises to the cytoplasm. Functionally, component of the large ribosomal subunit. The ribosome is a large ribonucleoprotein complex responsible for the synthesis of proteins in the cell. The protein is Large ribosomal subunit protein eL42 (RPL36A) of Oryctolagus cuniculus (Rabbit).